The primary structure comprises 899 residues: Androgen receptor (899 aa).

Residues 1-537 (MEVQLGLGRV…PIDYYFPPQK (537 aa)) are modulating. The segment at 1–566 (MEVQLGLGRV…GSCKVFFKRA (566 aa)) is interaction with ZNF318. Disordered regions lie at residues 35-146 (QNPG…LSLL) and 175-222 (QQQQ…LGGN). Residue Ser61 is modified to Phosphoserine; by CDK9. Position 75 is a phosphoserine (Ser75). Low complexity-rich tracts occupy residues 94 to 103 (QPSQQQAASE) and 175 to 193 (QQQQ…QQQQ). The span at 210–222 (APSSSKDSYLGGN) shows a compositional bias: polar residues. Tyr218 is modified (phosphotyrosine; by CSK). A Phosphoserine modification is found at Ser251. Tyr262 carries the post-translational modification Phosphotyrosine; by CSK and TNK2. A phosphotyrosine; by CSK mark is found at Tyr302, Tyr341, Tyr352, and Tyr357. Position 358 is a phosphotyrosine; by CSK and TNK2 (Tyr358). Residue Lys381 forms a Glycyl lysine isopeptide (Lys-Gly) (interchain with G-Cter in SUMO) linkage. Tyr388 carries the phosphotyrosine; by CSK modification. A disordered region spans residues 436-471 (EGQLYGPGGGGGSSSPSDAGPVAPYGYTRPPQGLTS). Lys500 is covalently cross-linked (Glycyl lysine isopeptide (Lys-Gly) (interchain with G-Cter in SUMO)). Phosphotyrosine; by CSK occurs at positions 514 and 531. The interaction with LPXN stretch occupies residues 531–898 (YYFPPQKTCL…GKVKPIYFHT (368 aa)). A DNA-binding region (nuclear receptor) is located at residues 538 to 611 (TCLICGDEAS…AGMTLGARKL (74 aa)). 2 NR C4-type zinc fingers span residues 539–559 (CLIC…CGSC) and 575–599 (CASR…LRKC). The interaction with HIPK3 stretch occupies residues 551–641 (YGALTCGSCK…TEDPSQKMTV (91 aa)). The segment at 571–898 (QKYLCASRND…GKVKPIYFHT (328 aa)) is interaction with CCAR1. An interaction with KAT7 region spans residues 604–898 (MTLGARKLKK…GKVKPIYFHT (295 aa)). Residue Ser630 is modified to Phosphoserine. Residues 648-879 (ECQPIFLNVL…DFPEMMAEII (232 aa)) enclose the NR LBD domain. 17beta-hydroxy-5alpha-androstan-3-one is bound by residues Asn685 and Arg732. Residues Lys825 and Lys827 each participate in a glycyl lysine isopeptide (Lys-Gly) (interchain with G-Cter in ubiquitin) cross-link. Thr857 is a 17beta-hydroxy-5alpha-androstan-3-one binding site. Tyr895 is subject to Phosphotyrosine; by CSK.

It belongs to the nuclear hormone receptor family. NR3 subfamily. In terms of assembly, binds DNA as a homodimer. Part of a ternary complex containing AR, EFCAB6/DJBP and PARK7. Interacts with HIPK3 and NR0B2 in the presence of androgen. The ligand binding domain interacts with KAT7/HBO1 in the presence of dihydrotestosterone. Interacts with EFCAB6/DJBP, PQBP1, RANBP9, SPDEF, SRA1, TGFB1I1, ZNF318 and RREB1. The AR N-terminal poly-Gln region binds Ran resulting in enhancement of AR-mediated transactivation. Ran-binding decreases as the poly-Gln length increases. Interacts with ZMIZ1/ZIMP10 and ZMIZ2/ZMIP7 which both enhance its transactivation activity. Interacts with RBAK. Interacts via the ligand-binding domain with LXXLL and FXXLF motifs from NCOA1, NCOA2, NCOA3 and MAGEA11. Interacts (via nuclear receptor DNA binding domain and nuclear receptor ligand binding domain) with NCOA4. Interacts with HIP1 (via coiled coil domain). Interacts with SLC30A9 and RAD54L2/ARIP4. Interacts with MACROD1 (via macro domain). Interacts (via ligand-binding domain) with TRIM68. Interacts with TNK2. Interacts with USP26. Interacts with RNF6. Interacts (regulated by RNF6 probably through polyubiquitination) with RNF14; regulates AR transcriptional activity. Interacts with PRMT2 and TRIM24. Interacts with RACK1. Interacts with RANBP10; this interaction enhances hormone-induced AR transcriptional activity. Interacts with PRPF6 in a hormone-independent way; this interaction enhances hormone-induced AR transcriptional activity. Interacts with STK4/MST1. Interacts with ZIPK/DAPK3. Interacts with LPXN. Interacts with MAK. Part of a complex containing AR, MAK and NCOA3. Interacts with CRY1. Interacts with CCAR1 and GATA2. Interacts with BUD31. Interacts with ARID4A. Interacts with ARID4B. Interacts (via NR LBD domain) with ZBTB7A; the interaction is direct and androgen-dependent. Interacts with NCOR1. Interacts with NCOR2. Interacts with CRY2 in a ligand-dependent manner. Post-translationally, phosphorylated in prostate cancer cells in response to several growth factors including EGF. Phosphorylation is induced by c-Src kinase (CSK). Tyr-514 is one of the major phosphorylation sites and an increase in phosphorylation and Src kinase activity is associated with prostate cancer progression. Phosphorylation by TNK2 enhances the DNA-binding and transcriptional activity. Phosphorylation at Ser-61 by CDK9 regulates AR promoter selectivity and cell growth. Phosphorylation by PAK6 leads to AR-mediated transcription inhibition. In terms of processing, sumoylated on Lys-381 (major) and Lys-500. Ubiquitinated. Deubiquitinated by USP26. 'Lys-6' and 'Lys-27'-linked polyubiquitination by RNF6 modulates AR transcriptional activity and specificity. Palmitoylated by ZDHHC7 and ZDHHC21. Palmitoylation is required for plasma membrane targeting and for rapid intracellular signaling via ERK and AKT kinases and cAMP generation.

It localises to the nucleus. Its subcellular location is the cytoplasm. In terms of biological role, steroid hormone receptors are ligand-activated transcription factors that regulate eukaryotic gene expression and affect cellular proliferation and differentiation in target tissues. Transcription factor activity is modulated by bound coactivator and corepressor proteins like ZBTB7A that recruits NCOR1 and NCOR2 to the androgen response elements/ARE on target genes, negatively regulating androgen receptor signaling and androgen-induced cell proliferation. Transcription activation is also down-regulated by NR0B2. Activated, but not phosphorylated, by HIPK3 and ZIPK/DAPK3. This chain is Androgen receptor (Ar), found in Mus musculus (Mouse).